Reading from the N-terminus, the 354-residue chain is Galectin-9 (354 aa).

Galectin domains lie at 17 to 147 and 226 to 354; these read FTGI…INFQ and FFTS…HVQT. Residues Asn47, His60, Arg64, Asn74, 81–87, His266, Arg270, Thr280, and 286–292 each bind a beta-D-galactoside; these read WGPEERK and WGPEERS.

As to expression, the isoform Long is expressed exclusively in the small intestine.

The protein resides in the cytoplasm. It localises to the nucleus. Its subcellular location is the secreted. Functionally, binds galactosides. Has high affinity for the Forssman pentasaccharide. Ligand for HAVCR2/TIM3. Binding to HAVCR2 induces T-helper type 1 lymphocyte (Th1) death. Also stimulates bactericidal activity in infected macrophages by causing macrophage activation and IL1B secretion which restricts intracellular bacterial growth. Ligand for P4HB; the interaction retains P4HB at the cell surface of Th2 T helper cells, increasing disulfide reductase activity at the plasma membrane, altering the plasma membrane redox state and enhancing cell migration. Ligand for CD44; the interaction enhances binding of SMAD3 to the FOXP3 promoter, leading to up-regulation of FOXP3 expression and increased induced regulatory T (iTreg) cell stability and suppressive function. Promotes ability of mesenchymal stromal cells to suppress T-cell proliferation. Expands regulatory T-cells and induces cytotoxic T-cell apoptosis following virus infection. Activates ERK1/2 phosphorylation inducing cytokine (IL-6, IL-8, IL-12) and chemokine (CCL2) production in mast and dendritic cells. Inhibits degranulation and induces apoptosis of mast cells. Induces maturation and migration of dendritic cells. Inhibits natural killer (NK) cell function. Can transform NK cell phenotype from peripheral to decidual during pregnancy. Astrocyte derived galectin-9 enhances microglial TNF production. May play a role in thymocyte-epithelial interactions relevant to the biology of the thymus. May provide the molecular basis for urate flux across cell membranes, allowing urate that is formed during purine metabolism to efflux from cells and serving as an electrogenic transporter that plays an important role in renal and gastrointestinal urate excretion. Highly selective to the anion urate. The sequence is that of Galectin-9 (Lgals9) from Rattus norvegicus (Rat).